A 162-amino-acid polypeptide reads, in one-letter code: Phosphopantetheine adenylyltransferase (162 aa).

Substrate is bound at residue Thr-10. ATP contacts are provided by residues 10-11 (TF) and His-18. Residues Lys-42, Met-74, and Arg-88 each coordinate substrate. Residues 89–91 (GLR), Glu-99, and 124–130 (YAFLSST) each bind ATP.

It belongs to the bacterial CoaD family. As to quaternary structure, homohexamer. The cofactor is Mg(2+).

The protein resides in the cytoplasm. The enzyme catalyses (R)-4'-phosphopantetheine + ATP + H(+) = 3'-dephospho-CoA + diphosphate. Its pathway is cofactor biosynthesis; coenzyme A biosynthesis; CoA from (R)-pantothenate: step 4/5. In terms of biological role, reversibly transfers an adenylyl group from ATP to 4'-phosphopantetheine, yielding dephospho-CoA (dPCoA) and pyrophosphate. In Aliivibrio salmonicida (strain LFI1238) (Vibrio salmonicida (strain LFI1238)), this protein is Phosphopantetheine adenylyltransferase.